The sequence spans 103 residues: Protein translation factor SUI1 homolog (103 aa).

The protein belongs to the SUI1 family.

In Methanocaldococcus jannaschii (strain ATCC 43067 / DSM 2661 / JAL-1 / JCM 10045 / NBRC 100440) (Methanococcus jannaschii), this protein is Protein translation factor SUI1 homolog.